The primary structure comprises 436 residues: Adenylosuccinate synthetase (436 aa).

GTP is bound by residues 13–19 and 41–43; these read GDEGKGK and GHT. Residue Asp-14 is the Proton acceptor of the active site. Residues Asp-14 and Gly-41 each contribute to the Mg(2+) site. IMP is bound by residues 14–17, 39–42, Thr-131, Arg-145, Gln-226, Thr-241, and Arg-309; these read DEGK and NAGH. His-42 serves as the catalytic Proton donor. 305–311 contacts substrate; it reads TVTGRKR. GTP-binding positions include Arg-311, 337–339, and 419–421; these read KLD and STG.

It belongs to the adenylosuccinate synthetase family. As to quaternary structure, homodimer. It depends on Mg(2+) as a cofactor.

It localises to the cytoplasm. The catalysed reaction is IMP + L-aspartate + GTP = N(6)-(1,2-dicarboxyethyl)-AMP + GDP + phosphate + 2 H(+). It functions in the pathway purine metabolism; AMP biosynthesis via de novo pathway; AMP from IMP: step 1/2. Plays an important role in the de novo pathway of purine nucleotide biosynthesis. Catalyzes the first committed step in the biosynthesis of AMP from IMP. The protein is Adenylosuccinate synthetase of Aromatoleum aromaticum (strain DSM 19018 / LMG 30748 / EbN1) (Azoarcus sp. (strain EbN1)).